The following is a 43-amino-acid chain: Iota-conotoxin-like S11.2 (43 aa).

4 disulfide bridges follow: C2-C16, C9-C19, C15-C24, and C18-C35. Residue M41 is modified to D-methionine. Residue R43 is a propeptide, removed by a carboxypeptidase.

It belongs to the conotoxin I1 superfamily. Expressed by the venom duct.

It localises to the secreted. Its function is as follows. Iota-conotoxins bind to voltage-gated sodium channels (Nav) and act as agonists by shifting the voltage-dependence of activation to more hyperpolarized levels. Produces general excitatory symptoms. The sequence is that of Iota-conotoxin-like S11.2 from Conus striatus (Striated cone).